A 242-amino-acid chain; its full sequence is MIKEINIKIKNFEGPLDLLLHLVSQYEMDIFEVPLVPVIEQYLIYIQTMKELELEVAGEYMLMASQLMLIKSRRLLPTVTETFIEDTEQLEYDLLAQIDEYRKYKMLSQDLDELHQERSHFYSKAKTEIITDETVLLQDKSALDLFLAFTKILELQRQHFQDENTKIAAEKFTIADKILELSTRFTEQKICKFSDLFSSSTNKDELVTTFMALLELIKNQQISFSQGELFGEIILERKETSE.

Belongs to the ScpA family. Component of a cohesin-like complex composed of ScpA, ScpB and the Smc homodimer, in which ScpA and ScpB bind to the head domain of Smc. The presence of the three proteins is required for the association of the complex with DNA.

It localises to the cytoplasm. Its function is as follows. Participates in chromosomal partition during cell division. May act via the formation of a condensin-like complex containing Smc and ScpB that pull DNA away from mid-cell into both cell halves. The sequence is that of Segregation and condensation protein A from Lactococcus lactis subsp. lactis (strain IL1403) (Streptococcus lactis).